The chain runs to 417 residues: Tyrosine--tRNA ligase (417 aa).

Position 34 (tyrosine 34) interacts with L-tyrosine. Residues 39-48 (PTGDSMHIGH) carry the 'HIGH' region motif. Positions 165 and 169 each coordinate L-tyrosine. The 'KMSKS' region signature appears at 227 to 231 (KFGKS). Residue lysine 230 participates in ATP binding. The S4 RNA-binding domain occupies 349-417 (ENIVLWLVDT…KKKYFLARVK (69 aa)).

This sequence belongs to the class-I aminoacyl-tRNA synthetase family. TyrS type 1 subfamily. Homodimer.

Its subcellular location is the cytoplasm. It carries out the reaction tRNA(Tyr) + L-tyrosine + ATP = L-tyrosyl-tRNA(Tyr) + AMP + diphosphate + H(+). Its function is as follows. Catalyzes the attachment of tyrosine to tRNA(Tyr) in a two-step reaction: tyrosine is first activated by ATP to form Tyr-AMP and then transferred to the acceptor end of tRNA(Tyr). This Pediococcus pentosaceus (strain ATCC 25745 / CCUG 21536 / LMG 10740 / 183-1w) protein is Tyrosine--tRNA ligase.